Reading from the N-terminus, the 120-residue chain is Large ribosomal subunit protein eL18 (120 aa).

It belongs to the eukaryotic ribosomal protein eL18 family.

This is Large ribosomal subunit protein eL18 from Methanococcus maripaludis (strain DSM 14266 / JCM 13030 / NBRC 101832 / S2 / LL).